The primary structure comprises 158 residues: 2S seed storage albumin protein (158 aa).

A signal peptide spans 1–21 (MTKFTILLISLLFCIAHTCSA). The Cell attachment site signature appears at 54–56 (RGD). A propeptide spanning residues 65–81 (NHILRTMRGRINYIRRN) is cleaved from the precursor.

This sequence belongs to the 2S seed storage albumins family. The protein consists of two chains linked by 2 disulfide bonds. As to expression, expressed in cotyledons. Maximal expression in parenchyma cells undergoing DNA endoreduplication and cell expansion but not in actively dividing cells of the cotyledon.

Its function is as follows. This is a 2S seed storage protein. Binds to mammalian chromatin, preventing the normal formation of the kinetochore complex in the centromere and leading to the disruption of mitosis. This is 2S seed storage albumin protein from Glycine max (Soybean).